We begin with the raw amino-acid sequence, 798 residues long: Phenylalanine--tRNA ligase beta subunit (798 aa).

Residues 39–148 (SKHLGGFVVG…VTLAVGASLL (110 aa)) form the tRNA-binding domain. Positions 401 to 476 (DWQKSIVLRP…RINGYDNIPA (76 aa)) constitute a B5 domain. Positions 454, 460, 463, and 464 each coordinate Mg(2+). The region spanning 704–797 (SALQPLDRDF…VAKATGGELR (94 aa)) is the FDX-ACB domain.

The protein belongs to the phenylalanyl-tRNA synthetase beta subunit family. Type 1 subfamily. Tetramer of two alpha and two beta subunits. Requires Mg(2+) as cofactor.

The protein resides in the cytoplasm. It carries out the reaction tRNA(Phe) + L-phenylalanine + ATP = L-phenylalanyl-tRNA(Phe) + AMP + diphosphate + H(+). The sequence is that of Phenylalanine--tRNA ligase beta subunit from Paramagnetospirillum magneticum (strain ATCC 700264 / AMB-1) (Magnetospirillum magneticum).